We begin with the raw amino-acid sequence, 352 residues long: GTPase Obg (352 aa).

Residues 1-159 (MHFLDQAKIY…MWVWLRLKLL (159 aa)) enclose the Obg domain. The OBG-type G domain occupies 160–327 (ADVGLLGLPN…LLDAVLGYLP (168 aa)). GTP contacts are provided by residues 166–173 (GLPNAGKS), 191–195 (FTTLV), 212–215 (DIPG), 279–282 (NKLD), and 308–310 (SGA). Residues serine 173 and threonine 193 each coordinate Mg(2+). Residues 329-352 (STSTETKGSEVEEVDEEGGEWSPI) are disordered. Over residues 339–352 (VEEVDEEGGEWSPI) the composition is skewed to acidic residues.

The protein belongs to the TRAFAC class OBG-HflX-like GTPase superfamily. OBG GTPase family. In terms of assembly, monomer. Requires Mg(2+) as cofactor.

The protein resides in the cytoplasm. Its function is as follows. An essential GTPase which binds GTP, GDP and possibly (p)ppGpp with moderate affinity, with high nucleotide exchange rates and a fairly low GTP hydrolysis rate. Plays a role in control of the cell cycle, stress response, ribosome biogenesis and in those bacteria that undergo differentiation, in morphogenesis control. The chain is GTPase Obg from Erythrobacter litoralis (strain HTCC2594).